We begin with the raw amino-acid sequence, 303 residues long: Aspartate carbamoyltransferase catalytic subunit (303 aa).

Carbamoyl phosphate-binding residues include Arg51 and Thr52. Residue Lys80 participates in L-aspartate binding. Residues Arg101, His129, and Gln132 each coordinate carbamoyl phosphate. Positions 162 and 221 each coordinate L-aspartate. Residues Leu260 and Pro261 each coordinate carbamoyl phosphate.

The protein belongs to the aspartate/ornithine carbamoyltransferase superfamily. ATCase family. As to quaternary structure, heterooligomer of catalytic and regulatory chains.

The enzyme catalyses carbamoyl phosphate + L-aspartate = N-carbamoyl-L-aspartate + phosphate + H(+). It functions in the pathway pyrimidine metabolism; UMP biosynthesis via de novo pathway; (S)-dihydroorotate from bicarbonate: step 2/3. Functionally, catalyzes the condensation of carbamoyl phosphate and aspartate to form carbamoyl aspartate and inorganic phosphate, the committed step in the de novo pyrimidine nucleotide biosynthesis pathway. The sequence is that of Aspartate carbamoyltransferase catalytic subunit from Saccharolobus solfataricus (strain ATCC 35092 / DSM 1617 / JCM 11322 / P2) (Sulfolobus solfataricus).